Consider the following 93-residue polypeptide: Beta-defensin 128 (93 aa).

The first 18 residues, 1–18 (MKLFLVLIILLFEVLTDG), serve as a signal peptide directing secretion. Cystine bridges form between C24–C52, C32–C46, and C36–C53.

The protein belongs to the beta-defensin family.

Its subcellular location is the secreted. Has antibacterial activity. This chain is Beta-defensin 128 (DEFB128), found in Homo sapiens (Human).